A 151-amino-acid polypeptide reads, in one-letter code: Regulatory protein RecX (151 aa).

The protein belongs to the RecX family.

The protein resides in the cytoplasm. Functionally, modulates RecA activity. This chain is Regulatory protein RecX, found in Prosthecochloris aestuarii (strain DSM 271 / SK 413).